Reading from the N-terminus, the 259-residue chain is tRNA (guanine-N(1)-)-methyltransferase (259 aa).

Residues Gly-117 and 137 to 142 (LGDFVL) each bind S-adenosyl-L-methionine.

It belongs to the RNA methyltransferase TrmD family. In terms of assembly, homodimer.

It is found in the cytoplasm. The enzyme catalyses guanosine(37) in tRNA + S-adenosyl-L-methionine = N(1)-methylguanosine(37) in tRNA + S-adenosyl-L-homocysteine + H(+). Functionally, specifically methylates guanosine-37 in various tRNAs. This Polaromonas sp. (strain JS666 / ATCC BAA-500) protein is tRNA (guanine-N(1)-)-methyltransferase.